The chain runs to 156 residues: Cyclic pyranopterin monophosphate synthase (156 aa).

Substrate-binding positions include leucine 73 to histidine 75 and methionine 110 to glutamate 111. Aspartate 125 is an active-site residue.

Belongs to the MoaC family. As to quaternary structure, homohexamer; trimer of dimers.

The enzyme catalyses (8S)-3',8-cyclo-7,8-dihydroguanosine 5'-triphosphate = cyclic pyranopterin phosphate + diphosphate. It functions in the pathway cofactor biosynthesis; molybdopterin biosynthesis. Its function is as follows. Catalyzes the conversion of (8S)-3',8-cyclo-7,8-dihydroguanosine 5'-triphosphate to cyclic pyranopterin monophosphate (cPMP). This Pseudomonas entomophila (strain L48) protein is Cyclic pyranopterin monophosphate synthase.